The chain runs to 197 residues: Peptidyl-tRNA hydrolase (197 aa).

Residue Tyr21 coordinates tRNA. His26 (proton acceptor) is an active-site residue. The tRNA site is built by Tyr72, Asn74, and Asn120.

Belongs to the PTH family. Monomer.

The protein resides in the cytoplasm. The catalysed reaction is an N-acyl-L-alpha-aminoacyl-tRNA + H2O = an N-acyl-L-amino acid + a tRNA + H(+). Hydrolyzes ribosome-free peptidyl-tRNAs (with 1 or more amino acids incorporated), which drop off the ribosome during protein synthesis, or as a result of ribosome stalling. Its function is as follows. Catalyzes the release of premature peptidyl moieties from peptidyl-tRNA molecules trapped in stalled 50S ribosomal subunits, and thus maintains levels of free tRNAs and 50S ribosomes. The chain is Peptidyl-tRNA hydrolase from Saccharophagus degradans (strain 2-40 / ATCC 43961 / DSM 17024).